Consider the following 133-residue polypeptide: Exonuclease VapC9 (133 aa).

Residues 5–113 enclose the PINc domain; it reads YLVDASALYA…LVLVTQDREL (109 aa). Residues Asp8, Asp92, and Asp110 each contribute to the Mg(2+) site.

It belongs to the PINc/VapC protein family. As to quaternary structure, homodimer, 2 of which then form a homotetramer. Requires Mg(2+) as cofactor.

With respect to regulation, inhibited by EDTA. Functionally, toxic component of a type II toxin-antitoxin (TA) system. In terms of biological role, has ribonuclease activity. Has a slow ssDNA exonuclease activity. The polypeptide is Exonuclease VapC9 (Pyrobaculum aerophilum (strain ATCC 51768 / DSM 7523 / JCM 9630 / CIP 104966 / NBRC 100827 / IM2)).